We begin with the raw amino-acid sequence, 443 residues long: Phosphoglucosamine mutase (443 aa).

The active-site Phosphoserine intermediate is Ser-101. Mg(2+)-binding residues include Ser-101, Asp-239, Asp-241, and Asp-243. Position 101 is a phosphoserine (Ser-101).

Belongs to the phosphohexose mutase family. Requires Mg(2+) as cofactor. Post-translationally, activated by phosphorylation.

It catalyses the reaction alpha-D-glucosamine 1-phosphate = D-glucosamine 6-phosphate. Its function is as follows. Catalyzes the conversion of glucosamine-6-phosphate to glucosamine-1-phosphate. This chain is Phosphoglucosamine mutase, found in Francisella philomiragia subsp. philomiragia (strain ATCC 25017 / CCUG 19701 / FSC 153 / O#319-036).